Here is an 81-residue protein sequence, read N- to C-terminus: Exodeoxyribonuclease 7 small subunit (81 aa).

The segment at 59-81 is disordered; sequence KLVDKDGNEKTLDPQNASAPEEE. The segment covering 60–70 has biased composition (basic and acidic residues); sequence LVDKDGNEKTL. Over residues 71-81 the composition is skewed to polar residues; the sequence is DPQNASAPEEE.

The protein belongs to the XseB family. In terms of assembly, heterooligomer composed of large and small subunits.

It localises to the cytoplasm. It catalyses the reaction Exonucleolytic cleavage in either 5'- to 3'- or 3'- to 5'-direction to yield nucleoside 5'-phosphates.. Functionally, bidirectionally degrades single-stranded DNA into large acid-insoluble oligonucleotides, which are then degraded further into small acid-soluble oligonucleotides. This is Exodeoxyribonuclease 7 small subunit from Lactobacillus gasseri (strain ATCC 33323 / DSM 20243 / BCRC 14619 / CIP 102991 / JCM 1131 / KCTC 3163 / NCIMB 11718 / NCTC 13722 / AM63).